The following is a 143-amino-acid chain: uncharacterized protein (143 aa).

An HTH marR-type domain is found at 5-137; the sequence is DARLASDLSL…LRSAADLMLA (133 aa). The H-T-H motif DNA-binding region spans 51 to 74; that stretch reads PGALAIRERVRPPSMTRVIASLAD.

Homodimer.

This is an uncharacterized protein from Mycobacterium bovis (strain ATCC BAA-935 / AF2122/97).